The primary structure comprises 682 residues: TPR repeat-containing thioredoxin TTL4 (682 aa).

Disordered stretches follow at residues Met1–Leu120 and Asn132–Ile157. Position 8 is a phosphoserine (Ser8). The span at Lys16–Asp39 shows a compositional bias: basic and acidic residues. Ser42 carries the phosphoserine modification. Residues Gly48 to Gly71 are compositionally biased toward low complexity. TPR repeat units lie at residues Ser211–Asn244, Ala246–Tyr278, Arg280–Ala312, Ala402–Asn435, Val449–Asn482, Ser483–Tyr516, and Lys518–Asp550. One can recognise a Thioredoxin domain in the interval Asp587–Glu674.

Widely expressed.

Involved in osmotic and salt stress tolerance. May play a role in the control of meristematic cell size during osmotic stress. In Arabidopsis thaliana (Mouse-ear cress), this protein is TPR repeat-containing thioredoxin TTL4 (TTL4).